The following is a 146-amino-acid chain: MEIILKQDVQNLGFKDDVVSVKPGYGRNFLIPQGFATLATPSAKKVLAENLKQRAHKEAKIVADAKALAETLKALEIKLTAKAGGEKLFGSITNIDIAEALEKSGNAIDRKFITSGVVKRIGKYNATVRLHRDVIVELPYEIVAEK.

The protein belongs to the bacterial ribosomal protein bL9 family.

Its function is as follows. Binds to the 23S rRNA. The protein is Large ribosomal subunit protein bL9 of Flavobacterium johnsoniae (strain ATCC 17061 / DSM 2064 / JCM 8514 / BCRC 14874 / CCUG 350202 / NBRC 14942 / NCIMB 11054 / UW101) (Cytophaga johnsonae).